The following is a 500-amino-acid chain: Glutamate decarboxylase (500 aa).

Residue K277 is modified to N6-(pyridoxal phosphate)lysine. Residues 469–500 (VHKKTDSEVQLEMITAWKKFVEEKKKKTNRVC) form a calmodulin-binding region.

This sequence belongs to the group II decarboxylase family. Homodimer. The cofactor is pyridoxal 5'-phosphate.

The catalysed reaction is L-glutamate + H(+) = 4-aminobutanoate + CO2. In terms of biological role, catalyzes the production of GABA. The calmodulin-binding is calcium-dependent and it is proposed that this may, directly or indirectly, form a calcium regulated control of GABA biosynthesis. The protein is Glutamate decarboxylase (GAD) of Petunia hybrida (Petunia).